Here is a 101-residue protein sequence, read N- to C-terminus: Large ribosomal subunit protein uL24 (101 aa).

The protein belongs to the universal ribosomal protein uL24 family. In terms of assembly, part of the 50S ribosomal subunit.

Functionally, one of two assembly initiator proteins, it binds directly to the 5'-end of the 23S rRNA, where it nucleates assembly of the 50S subunit. In terms of biological role, one of the proteins that surrounds the polypeptide exit tunnel on the outside of the subunit. The chain is Large ribosomal subunit protein uL24 from Streptococcus agalactiae serotype III (strain NEM316).